We begin with the raw amino-acid sequence, 163 residues long: Cyclic pyranopterin monophosphate synthase (163 aa).

Substrate contacts are provided by residues 74–76 and 111–112; these read MCH and ME. Aspartate 126 is an active-site residue.

Belongs to the MoaC family. As to quaternary structure, homohexamer; trimer of dimers.

The enzyme catalyses (8S)-3',8-cyclo-7,8-dihydroguanosine 5'-triphosphate = cyclic pyranopterin phosphate + diphosphate. It functions in the pathway cofactor biosynthesis; molybdopterin biosynthesis. Catalyzes the conversion of (8S)-3',8-cyclo-7,8-dihydroguanosine 5'-triphosphate to cyclic pyranopterin monophosphate (cPMP). This chain is Cyclic pyranopterin monophosphate synthase, found in Desulfitobacterium hafniense (strain DSM 10664 / DCB-2).